The primary structure comprises 483 residues: MNYFPIFANLAGRPVLVVGGGAVAARKISLLLKAGAEVRVAAKHLNAELSALAAENKILWLAEEFRAEHIRTVFLIIAASSDQALNRRVFHLAESCQKPVNVVDDRDHCSFIFPSVIDRNPVQIAVSSSGSAPVLARLLRERLEALLPPSLGDMAEISGRWRDAVKGKLKSVTERRRFWEKQFNGRFAALVKNRQNTLAERELAKQLEQNYQGGFVSLVGAGPGDAGLLTLKGLQEIQQADVVLYDALVSDGILSLVRRDAERIFVGKRARGGRTPQEDTNALMVRLAREGRRVVRLKGGDPFVFGRGGEELETLARHQIPFSVVPGITAAVGATAYAGIPLTHRDYAQSAVFVTGHRKADAPDIEWQTLARSRQTLVIYMGALKAALIAERLQQHGRSPDTPAAVISQGTLPAQKTATGTLANLSELAETAPNPALIVIGEVVGLHEKLAWFGENAKKESNPAEHAYFALDGLGTGQEQQAA.

A precorrin-2 dehydrogenase /sirohydrochlorin ferrochelatase region spans residues 1–203; the sequence is MNYFPIFANL…RQNTLAEREL (203 aa). NAD(+) contacts are provided by residues 22-23 and 43-44; these read AV and KH. Residue serine 128 is modified to Phosphoserine. Residues 214–483 form a uroporphyrinogen-III C-methyltransferase region; it reads GFVSLVGAGP…LGTGQEQQAA (270 aa). Proline 223 serves as a coordination point for S-adenosyl-L-methionine. The Proton acceptor role is filled by aspartate 246. Lysine 268 serves as the catalytic Proton donor. S-adenosyl-L-methionine is bound by residues 299-301, valine 304, 329-330, methionine 381, and glycine 410; these read GGD and TA.

This sequence in the N-terminal section; belongs to the precorrin-2 dehydrogenase / sirohydrochlorin ferrochelatase family. The protein in the C-terminal section; belongs to the precorrin methyltransferase family.

The enzyme catalyses uroporphyrinogen III + 2 S-adenosyl-L-methionine = precorrin-2 + 2 S-adenosyl-L-homocysteine + H(+). It catalyses the reaction precorrin-2 + NAD(+) = sirohydrochlorin + NADH + 2 H(+). The catalysed reaction is siroheme + 2 H(+) = sirohydrochlorin + Fe(2+). It functions in the pathway cofactor biosynthesis; adenosylcobalamin biosynthesis; precorrin-2 from uroporphyrinogen III: step 1/1. The protein operates within cofactor biosynthesis; adenosylcobalamin biosynthesis; sirohydrochlorin from precorrin-2: step 1/1. Its pathway is porphyrin-containing compound metabolism; siroheme biosynthesis; precorrin-2 from uroporphyrinogen III: step 1/1. It participates in porphyrin-containing compound metabolism; siroheme biosynthesis; siroheme from sirohydrochlorin: step 1/1. It functions in the pathway porphyrin-containing compound metabolism; siroheme biosynthesis; sirohydrochlorin from precorrin-2: step 1/1. Functionally, multifunctional enzyme that catalyzes the SAM-dependent methylations of uroporphyrinogen III at position C-2 and C-7 to form precorrin-2 via precorrin-1. Then it catalyzes the NAD-dependent ring dehydrogenation of precorrin-2 to yield sirohydrochlorin. Finally, it catalyzes the ferrochelation of sirohydrochlorin to yield siroheme. In Neisseria meningitidis serogroup C / serotype 2a (strain ATCC 700532 / DSM 15464 / FAM18), this protein is Siroheme synthase.